The sequence spans 430 residues: Divergent protein kinase domain 2A (430 aa).

Residues 1-35 (MWRLVPPKLGRLSRSLKLAALGSLLVLMVLHSPSL) form the signal peptide.

It belongs to the DIPK family.

It is found in the cytoplasmic vesicle. The protein resides in the COPI-coated vesicle. Its subcellular location is the golgi apparatus. The protein localises to the secreted. Its function is as follows. May play a role in cardiomyocyte proliferation through paracrine signaling and activation of the PPI3K-AKT-CDK7 signaling cascade. This is Divergent protein kinase domain 2A from Homo sapiens (Human).